The chain runs to 142 residues: Galectin-10 (142 aa).

At S2 the chain carries N-acetylserine. Positions 6 to 138 constitute a Galectin domain; sequence VPYTEAASLS…DISLTKFNVS (133 aa).

As to quaternary structure, interacts with CEL. Expressed abundantly in the bone marrow. Expressed exclusively by eosinophils and basophils. Not detected in monocytes and neutrophils. Expressed in CD25-positive regulatory T-cells (Treg) (at protein level). Found in intestinal tissue from patients with Celiac disease, expression is directly related to the histological grade of mucosal damage and to the number of eosinophils found in the duodenal lesion (at protein level). Found in sputum of patients with eosinophilic inflammatory diseases such as asthma (at protein level).

The protein resides in the cytoplasm. It localises to the cytosol. The protein localises to the cytoplasmic granule. Functionally, regulates immune responses through the recognition of cell-surface glycans. Essential for the anergy and suppressive function of CD25-positive regulatory T-cells (Treg). This Homo sapiens (Human) protein is Galectin-10 (CLC).